The chain runs to 166 residues: HTH-type transcriptional regulator PecS (166 aa).

In terms of domain architecture, HTH marR-type spans 25–160 (PMLVIGTLSR…LRALLGRVEK (136 aa)).

The protein localises to the cytoplasm. Its activity is regulated as follows. The presence of PecM is required to ensure the full regulation of the pecS-pecM intergenic region by PecS. In terms of biological role, negatively regulates the expression of genes encoding pectinase and cellulase, which play a major role in virulence, and the expression of the blue pigment indigoidine, which is implicated in pathogenicity and protection from oxidative stress. Represses the expression of genes involved in indigoidine biosynthesis by binding to indA and indC promoter regions. Also binds to promoter sites in the pecS-pecM intergenic region and negatively autoregulates its expression as well as that of pecM. In Dickeya dadantii (strain 3937) (Erwinia chrysanthemi (strain 3937)), this protein is HTH-type transcriptional regulator PecS.